A 213-amino-acid chain; its full sequence is DELTA-actitoxin-Aas1a (213 aa).

Residues Met-1–Ala-19 form the signal peptide. Residues Leu-20–Arg-34 constitute a propeptide that is removed on maturation. The tract at residues Ala-37–Gly-46 is plays an important role in the hemolytic activity. The tract at residues Gly-45–Asn-64 is N-terminal region. The phosphocholine site is built by Ser-88, Val-121, Ser-139, Pro-141, Tyr-167, Tyr-171, and Tyr-172. Residues Ser-139–Lys-154 are trp-rich region, which is important for the binding to lipid membrane. Positions Lys-178 to Asp-180 match the Cell attachment site, crucial for protein stability motif.

Belongs to the actinoporin family. Sea anemone subfamily. As to quaternary structure, octamer or nonamer in membranes. Monomer in the soluble state.

It is found in the secreted. Its subcellular location is the nematocyst. The protein resides in the target cell membrane. Its function is as follows. Pore-forming protein that forms cation-selective hydrophilic pores of around 1 nm and causes cytolysis. Pore formation is a multi-step process that involves specific recognition of membrane sphingomyelin (but neither cholesterol nor phosphatidylcholine) using aromatic rich region and adjacent phosphocholine (POC) binding site, firm binding to the membrane (mainly driven by hydrophobic interactions) accompanied by the transfer of the N-terminal region to the lipid-water interface and finally pore formation after oligomerization of monomers. This protein shows potent hemolytic activity (EC(50)=8.8 ng/ml) that is specifically inhibited by sphingomyelin. Shows no phospholipase A2 activity, nor antimicrobial activity against the four bacteria tested. Is lethal to crayfish. The chain is DELTA-actitoxin-Aas1a from Anthopleura asiatica (Sea anemone).